We begin with the raw amino-acid sequence, 289 residues long: 33 kDa chaperonin (289 aa).

2 disulfide bridges follow: C237–C239 and C270–C273.

Belongs to the HSP33 family. Post-translationally, under oxidizing conditions two disulfide bonds are formed involving the reactive cysteines. Under reducing conditions zinc is bound to the reactive cysteines and the protein is inactive.

The protein localises to the cytoplasm. Functionally, redox regulated molecular chaperone. Protects both thermally unfolding and oxidatively damaged proteins from irreversible aggregation. Plays an important role in the bacterial defense system toward oxidative stress. This Oceanobacillus iheyensis (strain DSM 14371 / CIP 107618 / JCM 11309 / KCTC 3954 / HTE831) protein is 33 kDa chaperonin.